Consider the following 86-residue polypeptide: Large ribosomal subunit protein bL27 (86 aa).

Gly residues predominate over residues 1–10 (MAQKKGGGST). The interval 1–20 (MAQKKGGGSTRNGRDSESKR) is disordered.

It belongs to the bacterial ribosomal protein bL27 family.

This is Large ribosomal subunit protein bL27 from Polynucleobacter necessarius subsp. necessarius (strain STIR1).